The following is an 81-amino-acid chain: Acyl carrier protein (81 aa).

The region spanning 4–79 (SEILEKVKAI…DVLDFINNKV (76 aa)) is the Carrier domain. An O-(pantetheine 4'-phosphoryl)serine modification is found at S39.

The protein belongs to the acyl carrier protein (ACP) family. In terms of processing, 4'-phosphopantetheine is transferred from CoA to a specific serine of apo-ACP by AcpS. This modification is essential for activity because fatty acids are bound in thioester linkage to the sulfhydryl of the prosthetic group.

It localises to the cytoplasm. It functions in the pathway lipid metabolism; fatty acid biosynthesis. Functionally, carrier of the growing fatty acid chain in fatty acid biosynthesis. In Thermosynechococcus vestitus (strain NIES-2133 / IAM M-273 / BP-1), this protein is Acyl carrier protein.